The sequence spans 477 residues: Cytochrome P450 716A1 (477 aa).

Residues 2 to 22 (YMAIMIILFLSSILLSLLLLL) form a helical membrane-spanning segment. A heme-binding site is contributed by C424.

The protein belongs to the cytochrome P450 family. It depends on heme as a cofactor.

The protein resides in the membrane. In terms of biological role, possesses triterpene oxidizing activity. Catalyzes the C28 hydroxylation of alpha-amyrin, beta-amyrin, and lupeol, producing uvaol, erythrodiol, and betulin, respectively. Catalyzes the C28 carboxylation of alpha- and beta-amyrin. The polypeptide is Cytochrome P450 716A1 (Arabidopsis thaliana (Mouse-ear cress)).